The chain runs to 138 residues: Large ribosomal subunit protein uL16 (138 aa).

Basic residues predominate over residues 1–16; it reads MLIPKRVKFRRQHRPN. The tract at residues 1 to 25 is disordered; that stretch reads MLIPKRVKFRRQHRPNRSGMSKGGN.

This sequence belongs to the universal ribosomal protein uL16 family. In terms of assembly, part of the 50S ribosomal subunit.

Binds 23S rRNA and is also seen to make contacts with the A and possibly P site tRNAs. This Corynebacterium urealyticum (strain ATCC 43042 / DSM 7109) protein is Large ribosomal subunit protein uL16.